A 129-amino-acid polypeptide reads, in one-letter code: Lysozyme C (129 aa).

The C-type lysozyme domain maps to 1 to 129 (KVYGRCELAA…VSVWTRGCRL (129 aa)). 4 disulfides stabilise this stretch: Cys-6-Cys-127, Cys-30-Cys-115, Cys-64-Cys-80, and Cys-76-Cys-94. Active-site residues include Glu-35 and Asp-52.

This sequence belongs to the glycosyl hydrolase 22 family. In terms of assembly, monomer.

Its subcellular location is the secreted. It carries out the reaction Hydrolysis of (1-&gt;4)-beta-linkages between N-acetylmuramic acid and N-acetyl-D-glucosamine residues in a peptidoglycan and between N-acetyl-D-glucosamine residues in chitodextrins.. Functionally, lysozymes have primarily a bacteriolytic function; those in tissues and body fluids are associated with the monocyte-macrophage system and enhance the activity of immunoagents. This is Lysozyme C (LYZ) from Lophura leucomelanos (Kalij pheasant).